The primary structure comprises 116 residues: Spermadhesin Z13 (116 aa).

2 disulfide bridges follow: cysteine 14-cysteine 35 and cysteine 58-cysteine 79. The CUB domain maps to 14–115 (CGDLYGEEYG…PDFFLIFRRV (102 aa)).

This sequence belongs to the spermadhesin family. In terms of assembly, homodimer; disulfide-linked. In terms of tissue distribution, seminal plasma.

Its subcellular location is the secreted. Its function is as follows. May be involved in the fertilization process. This is Spermadhesin Z13 from Bos taurus (Bovine).